Consider the following 108-residue polypeptide: UPF0060 membrane protein YnfA (108 aa).

The Periplasmic portion of the chain corresponds to 1–5 (MLKTT). The helical transmembrane segment at 6–26 (LLFFVTALCEIIGCFLPWLWI) threads the bilayer. Topologically, residues 27 to 30 (KRGA) are cytoplasmic. The chain crosses the membrane as a helical span at residues 31–51 (SVWWLLPAAASLALFVWLLTL). Residues 52–60 (HPAASGRVY) are Periplasmic-facing. A helical transmembrane segment spans residues 61–81 (AAYGGVYVCTALLWLRVVDGV). Residues 82-84 (RLT) are Cytoplasmic-facing. The chain crosses the membrane as a helical span at residues 85 to 105 (VYDWSGALIALCGMLIIVVGW). At 106–108 (GRT) the chain is on the periplasmic side.

Belongs to the UPF0060 family.

It is found in the cell inner membrane. In Salmonella typhi, this protein is UPF0060 membrane protein YnfA.